The chain runs to 393 residues: Zinc finger CCHC domain-containing protein 18 (393 aa).

2 disordered regions span residues 281 to 300 and 313 to 341; these read VEPEDPPLSSPGASSLRGTA and DDFDEESPSTSSGSGQRNNGPGDLGRTRK. Composition is skewed to polar residues over residues 291-300 and 320-331; these read PGASSLRGTA and PSTSSGSGQRNN. The CCHC-type zinc finger occupies 346–363; that stretch reads IRCPHCGEEGHAKETCDN.

The protein belongs to the ZCCHC12 family.

The sequence is that of Zinc finger CCHC domain-containing protein 18 from Mus musculus (Mouse).